Reading from the N-terminus, the 614-residue chain is Replication protein E1 (614 aa).

Residues 1–25 are disordered; it reads MASRVSDTGNGNENKENEGTVASDH. Over residues 13-25 the composition is skewed to basic and acidic residues; sequence ENKENEGTVASDH. Positions 88–90 match the Nuclear localization signal motif; the sequence is KRK. A phosphoserine; by host mark is found at Ser-94 and Ser-104. Residues 103-112 carry the Nuclear export signal motif; that stretch reads LSPRLAGVSL. The span at 136-146 shows a compositional bias: polar residues; the sequence is VEVSQLSSTPS. A disordered region spans residues 136–156; that stretch reads VEVSQLSSTPSAPGPDIRLPK. Residues 154–316 form a DNA-binding region region; the sequence is LPKPSDIDLE…NQCVVSNQQT (163 aa). One can recognise an SF3 helicase domain in the interval 403–567; sequence NSWRGIVHFL…FPLKGNGQPL (165 aa). An ATP-binding site is contributed by 443–450; that stretch reads GPSDTGKS.

This sequence belongs to the papillomaviridae E1 protein family. Can form hexamers. Interacts with E2 protein; this interaction increases E1 DNA binding specificity. Interacts with host DNA polymerase subunit POLA2. Interacts with host single stranded DNA-binding protein RPA1. Interacts with host TOP1; this interaction stimulates the enzymatic activity of TOP1. Post-translationally, phosphorylated.

It is found in the host nucleus. The enzyme catalyses Couples ATP hydrolysis with the unwinding of duplex DNA by translocating in the 3'-5' direction.. The catalysed reaction is ATP + H2O = ADP + phosphate + H(+). Functionally, ATP-dependent DNA 3'-5' helicase required for initiation of viral DNA replication. It forms a complex with the viral E2 protein. The E1-E2 complex binds to the replication origin which contains binding sites for both proteins. During the initial step, a dimer of E1 interacts with a dimer of protein E2 leading to a complex that binds the viral origin of replication with high specificity. Then, a second dimer of E1 displaces the E2 dimer in an ATP-dependent manner to form the E1 tetramer. Following this, two E1 monomers are added to each half of the site, which results in the formation of two E1 trimers on the viral ori. Subsequently, two hexamers will be created. The double hexamer acts as a bi-directional helicase machinery and unwinds the viral DNA and then recruits the host DNA polymerase to start replication. The chain is Replication protein E1 from Homo sapiens (Human).